The sequence spans 226 residues: Leucyl/phenylalanyl-tRNA--protein transferase (226 aa).

The protein belongs to the L/F-transferase family.

The protein resides in the cytoplasm. It carries out the reaction N-terminal L-lysyl-[protein] + L-leucyl-tRNA(Leu) = N-terminal L-leucyl-L-lysyl-[protein] + tRNA(Leu) + H(+). It catalyses the reaction N-terminal L-arginyl-[protein] + L-leucyl-tRNA(Leu) = N-terminal L-leucyl-L-arginyl-[protein] + tRNA(Leu) + H(+). The catalysed reaction is L-phenylalanyl-tRNA(Phe) + an N-terminal L-alpha-aminoacyl-[protein] = an N-terminal L-phenylalanyl-L-alpha-aminoacyl-[protein] + tRNA(Phe). Functions in the N-end rule pathway of protein degradation where it conjugates Leu, Phe and, less efficiently, Met from aminoacyl-tRNAs to the N-termini of proteins containing an N-terminal arginine or lysine. This chain is Leucyl/phenylalanyl-tRNA--protein transferase, found in Salinibacter ruber (strain DSM 13855 / M31).